Consider the following 438-residue polypeptide: Trigger factor (438 aa).

The PPIase FKBP-type domain occupies 160–245 (DDKVTIDFVG…VKKIQQAELP (86 aa)).

Belongs to the FKBP-type PPIase family. Tig subfamily.

The protein resides in the cytoplasm. It catalyses the reaction [protein]-peptidylproline (omega=180) = [protein]-peptidylproline (omega=0). Its function is as follows. Involved in protein export. Acts as a chaperone by maintaining the newly synthesized protein in an open conformation. Functions as a peptidyl-prolyl cis-trans isomerase. The polypeptide is Trigger factor (Francisella tularensis subsp. holarctica (strain LVS)).